The chain runs to 197 residues: Fucoxanthin-chlorophyll a-c binding protein D, chloroplastic (197 aa).

A chloroplast-targeting transit peptide spans 1–31 (MKTAVIASLIAGAAAFAPAKNAARTSVATNM). 3 consecutive transmembrane segments (helical) span residues 73–94 (ISML…PGTI), 114–133 (PAGG…SSVM), and 174–196 (GRAA…SLLP).

The protein belongs to the fucoxanthin chlorophyll protein family. The LHC complex of chromophytic algae is composed of fucoxanthin, chlorophyll A and C bound non-covalently by fucoxanthin chlorophyll proteins (FCPs). The ratio of the pigments in LHC; fucoxanthin: chlorophyll C: chlorophyll A; (0.6-1): (0.1-0.3): (1).

It is found in the plastid. It localises to the chloroplast thylakoid membrane. The light-harvesting complex (LHC) functions as a light receptor, it captures and delivers excitation energy to photosystems with which it is closely associated. Energy is transferred from the carotenoid and chlorophyll C (or B) to chlorophyll A and the photosynthetic reaction centers where it is used to synthesize ATP and reducing power. The chain is Fucoxanthin-chlorophyll a-c binding protein D, chloroplastic (FCPD) from Phaeodactylum tricornutum (Diatom).